The primary structure comprises 362 residues: Transcriptional repressor PifC (362 aa).

Functionally, transcription repression of its own gene by binding to the PIF operator (pifO) and replication initiation from the primary origin (ori-1). Transcriptional repressor of the pifA and pifB. This chain is Transcriptional repressor PifC (pifC), found in Escherichia coli (strain K12).